Here is a 693-residue protein sequence, read N- to C-terminus: DNA ligase (693 aa).

Residues 35-39 (DAEYD), 84-85 (SI), and Glu121 contribute to the NAD(+) site. The active-site N6-AMP-lysine intermediate is the Lys123. 4 residues coordinate NAD(+): Arg144, Glu180, Lys297, and Lys321. Cys418, Cys421, Cys436, and Cys442 together coordinate Zn(2+). Positions 601-690 (PASGSVAGLT…EQSPINNKDG (90 aa)) constitute a BRCT domain.

This sequence belongs to the NAD-dependent DNA ligase family. LigA subfamily. Mg(2+) is required as a cofactor. It depends on Mn(2+) as a cofactor.

The enzyme catalyses NAD(+) + (deoxyribonucleotide)n-3'-hydroxyl + 5'-phospho-(deoxyribonucleotide)m = (deoxyribonucleotide)n+m + AMP + beta-nicotinamide D-nucleotide.. Its function is as follows. DNA ligase that catalyzes the formation of phosphodiester linkages between 5'-phosphoryl and 3'-hydroxyl groups in double-stranded DNA using NAD as a coenzyme and as the energy source for the reaction. It is essential for DNA replication and repair of damaged DNA. This chain is DNA ligase, found in Azoarcus sp. (strain BH72).